Consider the following 71-residue polypeptide: UPF0435 protein RBAM_008100 (71 aa).

The protein belongs to the UPF0435 family.

This chain is UPF0435 protein RBAM_008100, found in Bacillus velezensis (strain DSM 23117 / BGSC 10A6 / LMG 26770 / FZB42) (Bacillus amyloliquefaciens subsp. plantarum).